The primary structure comprises 129 residues: Putative reactive intermediate deaminase TdcF (129 aa).

At Lys58 the chain carries N6-(pyridoxal phosphate)lysine. Residues 105-107 (RSC) and Glu120 contribute to the substrate site.

The protein belongs to the RutC family. As to quaternary structure, homotrimer.

It participates in amino-acid degradation; L-threonine degradation via propanoate pathway. Its function is as follows. May be a post-translational regulator that controls the metabolic fate of L-threonine or the potentially toxic intermediate 2-ketobutyrate. This is Putative reactive intermediate deaminase TdcF (tdcF) from Escherichia coli O6:H1 (strain CFT073 / ATCC 700928 / UPEC).